Here is a 504-residue protein sequence, read N- to C-terminus: Glucosaminyl-phosphatidylinositol-acyltransferase PIGW (504 aa).

At M1 to E21 the chain is on the lumenal side. N-linked (GlcNAc...) asparagine glycosylation occurs at N15. A helical transmembrane segment spans residues I22–F42. Residues S43–R56 lie on the Cytoplasmic side of the membrane. A helical transmembrane segment spans residues F57–W75. At A76 to L81 the chain is on the lumenal side. A helical transmembrane segment spans residues E82–Y98. Residues R99–C131 lie on the Cytoplasmic side of the membrane. The helical transmembrane segment at F132–F152 threads the bilayer. Residues P153–Y162 lie on the Lumenal side of the membrane. Residues G163–L183 form a helical membrane-spanning segment. At E184–S202 the chain is on the cytoplasmic side. A helical transmembrane segment spans residues L203–I223. At G224 to N237 the chain is on the lumenal side. A helical transmembrane segment spans residues F238–L258. The Cytoplasmic segment spans residues N259–K260. A helical transmembrane segment spans residues S261–L281. Over K282–G305 the chain is Lumenal. The helical transmembrane segment at I306–M326 threads the bilayer. Residues H327–K338 lie on the Cytoplasmic side of the membrane. Residues V339–V359 form a helical membrane-spanning segment. Residues N360–N370 are Lumenal-facing. Residues L371–G391 form a helical membrane-spanning segment. The Cytoplasmic portion of the chain corresponds to D392–Q448. S416 bears the Phosphoserine mark. A helical transmembrane segment spans residues L449–L469. Over H470–T473 the chain is Lumenal. Residues L474–L494 form a helical membrane-spanning segment. Over Y495–W504 the chain is Cytoplasmic.

Belongs to the PIGW family.

It localises to the endoplasmic reticulum membrane. It participates in glycolipid biosynthesis; glycosylphosphatidylinositol-anchor biosynthesis. In terms of biological role, acyltransferase that catalyzes the acyl transfer from an acyl-CoA at the 2-OH position of the inositol ring of glucosaminyl phosphatidylinositol (GlcN-PI) to generate glucosaminyl acyl phosphatidylinositol (GlcN-(acyl)PI) and participates in the fourth step of GPI-anchor biosynthesis. Required for the transport of GPI-anchored proteins to the plasma membrane. Acetylation during GPI-anchor biosynthesis is not essential for the subsequent mannosylation and is usually removed soon after the attachment of GPIs to proteins. This is Glucosaminyl-phosphatidylinositol-acyltransferase PIGW from Homo sapiens (Human).